Reading from the N-terminus, the 473-residue chain is Photosystem II CP43 reaction center protein (473 aa).

Residues 1–14 (MKTLYSLRRFYPVE) constitute a propeptide that is removed on maturation. Thr-15 is subject to N-acetylthreonine. A Phosphothreonine modification is found at Thr-15. 5 helical membrane passes run 69–93 (LFEV…PHLA), 134–155 (LLGP…KDRN), 178–200 (KALY…RKIT), 255–275 (KPFA…LSYS), and 291–312 (WFNN…ASQA). Glu-367 provides a ligand contact to [CaMn4O5] cluster. The chain crosses the membrane as a helical span at residues 447-471 (RARAAAAGFEKGIDRDFEPVLSMTP).

It belongs to the PsbB/PsbC family. PsbC subfamily. PSII is composed of 1 copy each of membrane proteins PsbA, PsbB, PsbC, PsbD, PsbE, PsbF, PsbH, PsbI, PsbJ, PsbK, PsbL, PsbM, PsbT, PsbX, PsbY, PsbZ, Psb30/Ycf12, at least 3 peripheral proteins of the oxygen-evolving complex and a large number of cofactors. It forms dimeric complexes. It depends on Binds multiple chlorophylls and provides some of the ligands for the Ca-4Mn-5O cluster of the oxygen-evolving complex. It may also provide a ligand for a Cl- that is required for oxygen evolution. PSII binds additional chlorophylls, carotenoids and specific lipids. as a cofactor.

It localises to the plastid. The protein resides in the chloroplast thylakoid membrane. Its function is as follows. One of the components of the core complex of photosystem II (PSII). It binds chlorophyll and helps catalyze the primary light-induced photochemical processes of PSII. PSII is a light-driven water:plastoquinone oxidoreductase, using light energy to abstract electrons from H(2)O, generating O(2) and a proton gradient subsequently used for ATP formation. In Eucalyptus globulus subsp. globulus (Tasmanian blue gum), this protein is Photosystem II CP43 reaction center protein.